We begin with the raw amino-acid sequence, 119 residues long: Large ribosomal subunit protein bL20 (119 aa).

The protein belongs to the bacterial ribosomal protein bL20 family.

Functionally, binds directly to 23S ribosomal RNA and is necessary for the in vitro assembly process of the 50S ribosomal subunit. It is not involved in the protein synthesizing functions of that subunit. This chain is Large ribosomal subunit protein bL20, found in Deinococcus geothermalis (strain DSM 11300 / CIP 105573 / AG-3a).